A 374-amino-acid chain; its full sequence is Chaperone protein DnaJ (374 aa).

Residues 5-70 enclose the J domain; the sequence is DYYEVLGVAR…DKRARYDRFG (66 aa). The segment at 135–213 adopts a CR-type zinc-finger fold; that stretch reads GDEVTLRLPK…CKGSGILQQV (79 aa). Zn(2+) is bound by residues Cys148, Cys151, Cys165, Cys168, Cys187, Cys190, Cys201, and Cys204. CXXCXGXG motif repeat units lie at residues 148-155, 165-172, 187-194, and 201-208; these read CDECNGSG, CRHCGGNG, CPVCRGEG, and CPKCKGSG.

The protein belongs to the DnaJ family. In terms of assembly, homodimer. Zn(2+) serves as cofactor.

It is found in the cytoplasm. Participates actively in the response to hyperosmotic and heat shock by preventing the aggregation of stress-denatured proteins and by disaggregating proteins, also in an autonomous, DnaK-independent fashion. Unfolded proteins bind initially to DnaJ; upon interaction with the DnaJ-bound protein, DnaK hydrolyzes its bound ATP, resulting in the formation of a stable complex. GrpE releases ADP from DnaK; ATP binding to DnaK triggers the release of the substrate protein, thus completing the reaction cycle. Several rounds of ATP-dependent interactions between DnaJ, DnaK and GrpE are required for fully efficient folding. Also involved, together with DnaK and GrpE, in the DNA replication of plasmids through activation of initiation proteins. The chain is Chaperone protein DnaJ from Nitratidesulfovibrio vulgaris (strain DSM 19637 / Miyazaki F) (Desulfovibrio vulgaris).